Consider the following 106-residue polypeptide: uncharacterized protein (106 aa).

The interval 1-23 (MASGAPPLTQKTPSHARRKERRR) is disordered. The span at 14–23 (SHARRKERRR) shows a compositional bias: basic residues.

This is an uncharacterized protein from Treponema pallidum (strain Nichols).